A 28-amino-acid chain; its full sequence is Expansin-B1 (28 aa).

The 18-residue stretch at 11–28 (MLLSLQGPXSLRMVSESG) folds into the Expansin-like CBD domain.

This sequence belongs to the expansin family. Expansin B subfamily.

The protein localises to the secreted. Its subcellular location is the cell wall. It localises to the membrane. May cause loosening and extension of plant cell walls by disrupting non-covalent bonding between cellulose microfibrils and matrix glucans. The sequence is that of Expansin-B1 from Pseudotsuga menziesii (Douglas-fir).